A 184-amino-acid polypeptide reads, in one-letter code: Gremlin-1 (184 aa).

Residues 1–24 (MSRTAYTVGALLLLLGTLLPAAEG) form the signal peptide. Residues 24 to 77 (GKKKGSQGAIPPPDKAQHNDSEQTQSPQQPGSRNRGRGQGRGTAMPGEEVLESS) form a disordered region. N-linked (GlcNAc...) asparagine glycosylation occurs at asparagine 42. Disulfide bonds link cysteine 94/cysteine 144, cysteine 108/cysteine 158, cysteine 118/cysteine 176, and cysteine 122/cysteine 178. A CTCK domain is found at 94–184 (CKTQPLKQTI…QCRCISIDLD (91 aa)).

Belongs to the DAN family. In terms of assembly, homodimer; can also form homooligomers. Interacts with BMP2; can form higher oligomers with BMP2. Interacts with SLIT1 and SLIT2 in a glycosylation-dependent manner. As to expression, highly expressed in small intestine, fetal brain and colon. Expression is restricted to intestinal subepithelial myofibroblasts (ISEMFs) at the crypt base. In subjects with HMPS1, by contrast, GREM1 is expressed, not only in basal ISEMFs, but also at very high levels in epithelial cells (predominantly colonocytes), with expression extending most of the way up the sides of the crypt. Weakly expressed in brain, ovary, prostate, pancreas and skeletal muscle. In brain found in the region localized around the internal capsule in the large subcortical nuclei, including caudate, putamen, substantia nigra, thalamus and subthalamus. Predominantly expressed in normal cells including neurons, astrocytes and fibroblasts.

The protein localises to the secreted. Its function is as follows. Cytokine that may play an important role during carcinogenesis and metanephric kidney organogenesis, as a BMP antagonist required for early limb outgrowth and patterning in maintaining the FGF4-SHH feedback loop. Down-regulates the BMP4 signaling in a dose-dependent manner. Antagonist of BMP2; inhibits BMP2-mediated differentiation of osteoblasts (in vitro). Acts as inhibitor of monocyte chemotaxis. Can inhibit the growth or viability of normal cells but not transformed cells when is overexpressed. The sequence is that of Gremlin-1 (GREM1) from Homo sapiens (Human).